The chain runs to 968 residues: RNA polymerase-associated protein RapA (968 aa).

The Helicase ATP-binding domain maps to 163-332 (EVGRRFAPRV…FARLRLLDPD (170 aa)). 176 to 183 (DEVGLGKT) contributes to the ATP binding site. The DEAH box signature appears at 278 to 281 (DEAH). One can recognise a Helicase C-terminal domain in the interval 491–641 (RVDWLINFLK…AFEQTCPSGH (151 aa)).

This sequence belongs to the SNF2/RAD54 helicase family. RapA subfamily. As to quaternary structure, interacts with the RNAP. Has a higher affinity for the core RNAP than for the holoenzyme. Its ATPase activity is stimulated by binding to RNAP.

Functionally, transcription regulator that activates transcription by stimulating RNA polymerase (RNAP) recycling in case of stress conditions such as supercoiled DNA or high salt concentrations. Probably acts by releasing the RNAP, when it is trapped or immobilized on tightly supercoiled DNA. Does not activate transcription on linear DNA. Probably not involved in DNA repair. This is RNA polymerase-associated protein RapA from Shewanella sediminis (strain HAW-EB3).